Consider the following 130-residue polypeptide: Mitochondrial import protein 1 (130 aa).

Residues 1 to 41 are disordered; that stretch reads MSAEEISNPLAESGVTISSDSEQYSAPESASPQSPSSSSPA. The span at 15–24 shows a compositional bias: polar residues; sequence VTISSDSEQY. Low complexity predominate over residues 25-41; sequence SAPESASPQSPSSSSPA.

This sequence belongs to the MIM1 family.

The protein localises to the mitochondrion outer membrane. In terms of biological role, required for the assembly of the TOM (translocase of outer membrane) receptor complex, which is responsible for the recognition and translocation of cytosolically synthesized mitochondrial preproteins. The protein is Mitochondrial import protein 1 of Neurospora crassa (strain ATCC 24698 / 74-OR23-1A / CBS 708.71 / DSM 1257 / FGSC 987).